A 304-amino-acid chain; its full sequence is N-acetylmuramic acid 6-phosphate etherase 1 (304 aa).

The segment covering 1–10 (MENSHLGSLT) has biased composition (polar residues). Residues 1–20 (MENSHLGSLTTERRNERSKR) form a disordered region. The 164-residue stretch at 58–221 (AVGSLKKGGR…STAAMIKMGK (164 aa)) folds into the SIS domain. Glutamate 86 (proton donor) is an active-site residue. Residue glutamate 117 is part of the active site.

This sequence belongs to the GCKR-like family. MurNAc-6-P etherase subfamily. As to quaternary structure, homodimer.

It carries out the reaction N-acetyl-D-muramate 6-phosphate + H2O = N-acetyl-D-glucosamine 6-phosphate + (R)-lactate. The protein operates within amino-sugar metabolism; N-acetylmuramate degradation. Functionally, specifically catalyzes the cleavage of the D-lactyl ether substituent of MurNAc 6-phosphate, producing GlcNAc 6-phosphate and D-lactate. This Bacillus licheniformis (strain ATCC 14580 / DSM 13 / JCM 2505 / CCUG 7422 / NBRC 12200 / NCIMB 9375 / NCTC 10341 / NRRL NRS-1264 / Gibson 46) protein is N-acetylmuramic acid 6-phosphate etherase 1.